We begin with the raw amino-acid sequence, 117 residues long: uncharacterized protein (117 aa).

Residues 1-18 form the signal peptide; it reads MKFFWVSSLLGLLGLSTA. Asn86 carries an N-linked (GlcNAc...) asparagine glycan.

This is an uncharacterized protein from Schizosaccharomyces pombe (strain 972 / ATCC 24843) (Fission yeast).